The primary structure comprises 140 residues: MAMTMHVDIVSAEREIFSGTVNMLFAPAEMGEVGIMPRHTPLITRLKPGEVRLQRPEGQEDFFYVSGGLLEVQPHVVTVLADTAQRAADIDEAAALAAKQRAEEALQDREGKLDYARAQAELAEAIAQLKAIQRIRKKLG.

This sequence belongs to the ATPase epsilon chain family. As to quaternary structure, F-type ATPases have 2 components, CF(1) - the catalytic core - and CF(0) - the membrane proton channel. CF(1) has five subunits: alpha(3), beta(3), gamma(1), delta(1), epsilon(1). CF(0) has three main subunits: a, b and c.

Its subcellular location is the cell inner membrane. Produces ATP from ADP in the presence of a proton gradient across the membrane. The polypeptide is ATP synthase epsilon chain (Nitrosococcus oceani (strain ATCC 19707 / BCRC 17464 / JCM 30415 / NCIMB 11848 / C-107)).